A 107-amino-acid polypeptide reads, in one-letter code: Multidrug resistance protein mmr (107 aa).

Transmembrane regions (helical) follow at residues 2 to 19, 29 to 51, 58 to 80, and 84 to 106; these read TYLF…ATSL, LWPT…VSIS, VAYA…LFLG, and SVTK…LTGA.

This sequence belongs to the drug/metabolite transporter (DMT) superfamily. Small multidrug resistance (SMR) (TC 2.A.7.1) family. Mmr subfamily.

It is found in the cell membrane. In terms of biological role, multidrug efflux pump. Confers resistance to tetraphenylphosphonium (TPP), erythromycin, ethidium bromide, acriflavine, safranin O and pyronin Y. In Mycolicibacterium paratuberculosis (strain ATCC BAA-968 / K-10) (Mycobacterium paratuberculosis), this protein is Multidrug resistance protein mmr (mmr).